The chain runs to 175 residues: Ribosome maturation factor RimM (175 aa).

Residues 96–175 form the PRC barrel domain; that stretch reads EGDYYWHDLI…TIEVDWDAGF (80 aa).

It belongs to the RimM family. Binds ribosomal protein uS19.

The protein resides in the cytoplasm. An accessory protein needed during the final step in the assembly of 30S ribosomal subunit, possibly for assembly of the head region. Essential for efficient processing of 16S rRNA. May be needed both before and after RbfA during the maturation of 16S rRNA. It has affinity for free ribosomal 30S subunits but not for 70S ribosomes. This Haemophilus influenzae (strain PittEE) protein is Ribosome maturation factor RimM.